The primary structure comprises 61 residues: Small ribosomal subunit protein uS14 (61 aa).

The Zn(2+) site is built by C24, C27, C40, and C43.

This sequence belongs to the universal ribosomal protein uS14 family. Zinc-binding uS14 subfamily. In terms of assembly, part of the 30S ribosomal subunit. Contacts proteins S3 and S10. Requires Zn(2+) as cofactor.

Its function is as follows. Binds 16S rRNA, required for the assembly of 30S particles and may also be responsible for determining the conformation of the 16S rRNA at the A site. This is Small ribosomal subunit protein uS14 from Streptococcus pyogenes serotype M49 (strain NZ131).